A 518-amino-acid chain; its full sequence is Cytokinin hydroxylase (518 aa).

Residues 1–21 (MLLTILKSLLVIFVTTILRVL) form a helical membrane-spanning segment. Cysteine 464 serves as a coordination point for heme.

The protein belongs to the cytochrome P450 family. The cofactor is heme. As to expression, expressed in roots and flowers.

It localises to the membrane. It catalyses the reaction N(6)-(dimethylallyl)adenosine 5'-phosphate + NADPH + O2 + H(+) = 9-ribosyl-trans-zeatin 5'-phosphate + NADP(+) + H2O. The enzyme catalyses N(6)-(dimethylallyl)adenosine 5'-diphosphate + NADPH + O2 + H(+) = 9-ribosyl-trans-zeatin 5'-diphosphate + NADP(+) + H2O. It carries out the reaction N(6)-(dimethylallyl)adenosine 5'-triphosphate + NADPH + O2 + H(+) = 9-ribosyl-trans-zeatin 5'-triphosphate + NADP(+) + H2O. Cytokinin hydroxylase that catalyzes the biosynthesis of trans-zeatin via the isopentenyladenine riboside 5'-monophosphate (iPRMP)-dependent pathway. Can use isopentenyladenosine-5'-monophosphate, isopentenyladenosine-5'-diphosphate and isopentenyladenosine-5'-triphosphate as substrate. The polypeptide is Cytokinin hydroxylase (CYP735A1) (Arabidopsis thaliana (Mouse-ear cress)).